Here is a 37-residue protein sequence, read N- to C-terminus: Large ribosomal subunit protein bL36 (37 aa).

It belongs to the bacterial ribosomal protein bL36 family.

The protein is Large ribosomal subunit protein bL36 of Syntrophomonas wolfei subsp. wolfei (strain DSM 2245B / Goettingen).